The chain runs to 688 residues: Large T antigen (688 aa).

M1 carries the post-translational modification N-acetylmethionine; by host. The region spanning 12-75 (ELMDLLGLDR…VKVAHQPDFG (64 aa)) is the J domain. The LXCXE motif signature appears at 105–109 (LFCHE). Phosphoserine; by host occurs at positions 114, 121, and 124. The tract at residues 115–135 (DDENTGSQHSTPPKKKKKVED) is disordered. T125 bears the Phosphothreonine; by host mark. Positions 126–133 (PPKKKKKV) match the Nuclear localization signal motif. A DNA-binding region (T-ag OBD) is located at residues 140 to 255 (PVDLHAFLSQ…EESIQGGLKE (116 aa)). The T-ag D1-type zinc-finger motif lies at 266 to 358 (TKQVSWKLVT…QRVDSIHMTR (93 aa)). C303, C306, H314, and H318 together coordinate Zn(2+). Residues 401–561 (QMDTVIYDFL…AYLRKSLSCS (161 aa)) enclose the SF3 helicase domain. 427-434 (GPIDSGKT) contacts ATP. A disordered region spans residues 632–658 (EEDSEAEDSGHGSSTESQSQCFSQVSE). Over residues 642 to 658 (HGSSTESQSQCFSQVSE) the composition is skewed to polar residues. S660 carries the phosphoserine; by host modification. An N6-acetyllysine; by host modification is found at K680. The residue at position 684 (T684) is a Phosphothreonine; by host.

As to quaternary structure, forms homohexamers in the presence of ATP. Interacts with host HDAC1. Interacts (via LXCXE domain) with host RB1; the interaction induces the aberrant dissociation of RB1-E2F1 complex thereby disrupting RB1's activity. Interacts (via LXCXE domain) with host pRB-related proteins RBL1 and RBL2. Interacts (via C-terminus) with host TOP1 and POLA1 allowing DNA replication. Interacts with host TP53, inhibiting TP53 binding to DNA. Interacts with host preinitiation complex components TBP, TFIIA and TFIID to regulate transcription initiation. It depends on Mg(2+) as a cofactor. Phosphorylated on both serine and threonine residues. Small t antigen inhibits the dephosphorylation by the AC form of PP2A. Post-translationally, O-Glycosylated near the C-terminal region. In terms of processing, acetylated by CBP in a TP53-dependent manner.

The protein resides in the host nucleus. The enzyme catalyses Couples ATP hydrolysis with the unwinding of duplex DNA by translocating in the 3'-5' direction.. It catalyses the reaction ATP + H2O = ADP + phosphate + H(+). Functionally, isoform large T antigen is a key early protein essential for both driving viral replication and inducing cellular transformation. Plays a role in viral genome replication by driving entry of quiescent cells into the cell cycle and by autoregulating the synthesis of viral early mRNA. Displays highly oncogenic activities by corrupting the host cellular checkpoint mechanisms that guard cell division and the transcription, replication, and repair of DNA. Participates in the modulation of cellular gene expression preceeding viral DNA replication. This step involves binding to host key cell cycle regulators retinoblastoma protein RB1/pRb and TP53. Induces the disassembly of host E2F1 transcription factors from RB1, thus promoting transcriptional activation of E2F1-regulated S-phase genes. Inhibits host TP53 binding to DNA, abrogating the ability of TP53 to stimulate gene expression. Plays the role of a TFIID-associated factor (TAF) in transcription initiation for all three RNA polymerases, by stabilizing the TBP-TFIIA complex on promoters. Initiates viral DNA replication and unwinding via interactions with the viral origin of replication. Binds two adjacent sites in the SV40 origin. The replication fork movement is facilitated by Large T antigen helicase activity. Has processive 3'-5' DNA helicase activity which requires a short 3' single-stranded region and ATP. Activates the transcription of viral late mRNA, through host TBP and TFIIA stabilization. Interferes with histone deacetylation mediated by HDAC1, leading to activation of transcription. The sequence is that of Large T antigen from JC polyomavirus (JCPyV).